A 146-amino-acid polypeptide reads, in one-letter code: DNA-directed RNA polymerase subunit beta (146 aa).

This sequence belongs to the RNA polymerase beta chain family. As to quaternary structure, the RNAP catalytic core consists of 2 alpha, 1 beta, 1 beta' and 1 omega subunit. When a sigma factor is associated with the core the holoenzyme is formed, which can initiate transcription.

It carries out the reaction RNA(n) + a ribonucleoside 5'-triphosphate = RNA(n+1) + diphosphate. In terms of biological role, DNA-dependent RNA polymerase catalyzes the transcription of DNA into RNA using the four ribonucleoside triphosphates as substrates. This is DNA-directed RNA polymerase subunit beta (rpoB) from Liberibacter africanus (Citrus greening disease).